The following is a 235-amino-acid chain: Glucosamine-6-phosphate deaminase (235 aa).

D62 acts as the Proton acceptor; for enolization step in catalysis. N128 serves as the catalytic For ring-opening step. H130 (proton acceptor; for ring-opening step) is an active-site residue. E135 acts as the For ring-opening step in catalysis.

It belongs to the glucosamine/galactosamine-6-phosphate isomerase family. NagB subfamily.

The catalysed reaction is alpha-D-glucosamine 6-phosphate + H2O = beta-D-fructose 6-phosphate + NH4(+). It participates in amino-sugar metabolism; N-acetylneuraminate degradation; D-fructose 6-phosphate from N-acetylneuraminate: step 5/5. Its function is as follows. Catalyzes the reversible isomerization-deamination of glucosamine 6-phosphate (GlcN6P) to form fructose 6-phosphate (Fru6P) and ammonium ion. The polypeptide is Glucosamine-6-phosphate deaminase (Latilactobacillus sakei subsp. sakei (strain 23K) (Lactobacillus sakei subsp. sakei)).